We begin with the raw amino-acid sequence, 196 residues long: Molybdenum cofactor guanylyltransferase (196 aa).

GTP is bound by residues 12-14, lysine 25, asparagine 53, aspartate 71, and aspartate 101; that span reads LAG. Aspartate 101 lines the Mg(2+) pocket.

The protein belongs to the MobA family. As to quaternary structure, monomer. The cofactor is Mg(2+).

It localises to the cytoplasm. It catalyses the reaction Mo-molybdopterin + GTP + H(+) = Mo-molybdopterin guanine dinucleotide + diphosphate. In terms of biological role, transfers a GMP moiety from GTP to Mo-molybdopterin (Mo-MPT) cofactor (Moco or molybdenum cofactor) to form Mo-molybdopterin guanine dinucleotide (Mo-MGD) cofactor. This Bordetella petrii (strain ATCC BAA-461 / DSM 12804 / CCUG 43448) protein is Molybdenum cofactor guanylyltransferase.